Consider the following 183-residue polypeptide: Ras-related protein Rap-2a (183 aa).

Position 10–17 (10–17) interacts with GTP; the sequence is GSGGVGKS. Residues 32–40 carry the Effector region motif; the sequence is YDPTIEDFY. Residues 57-61 and 116-119 each bind GTP; these read DTAGT and NKVD. Residues Cys-176 and Cys-177 are each lipidated (S-palmitoyl cysteine). The residue at position 180 (Cys-180) is a Cysteine methyl ester. Residue Cys-180 is the site of S-farnesyl cysteine attachment. Positions 181–183 are cleaved as a propeptide — removed in mature form; sequence NIQ.

The protein belongs to the small GTPase superfamily. Ras family. As to quaternary structure, interacts with PLCE1. Interacts with ARHGAP29, SGSM1, SGSM2 and SGSM3. Interacts (GTP-bound form preferentially) with MAP4K4. Interacts with MINK1. Interacts with cytoskeletal actin. Interacts (GTP-bound form) with RUNDC3A. Interacts (GTP-bound form preferentially) with TNIK (via the CNH domain); the interaction is direct and recruits RAP2A to the E3 ubiquitin ligase NEDD4. Interacts with RGS14; the interaction is GTP-dependent. In terms of processing, ubiquitinated; undergoes 'Lys-63' monoubiquitination and diubiquitination by NEDD4. Multiple lysine residues are probably modified. Ubiquitination requires TNIK, prevents interaction with effectors and inactivates RAP2A. Ubiquitination by the ECS(RAB40B) complex leads to RAP2A localization to lamellipodia plasma membrane, activation, and regulation of sorting at early endosomes for recycling to the lamellipodia plasma membrane. Palmitoylated. Palmitoylation is required for association with recycling endosome membranes and activation of TNIK. As to expression, expressed in granular layer of the cerebellum, forebrain, striatum, layer V of the cortex, olfactory cortex, tubercules, subthalamic and hippocampus, particularly in the CA2 region, to a lesser extent in the CA1 region and the external layer of the dentate gyrus. Expressed in neurons.

It localises to the midbody. Its subcellular location is the cell projection. The protein resides in the lamellipodium membrane. The protein localises to the golgi apparatus. It is found in the recycling endosome membrane. It localises to the lysosome. The catalysed reaction is GTP + H2O = GDP + phosphate + H(+). Activated by the guanine nucleotide-exchange factors RAPGEF3 and RAPGEF4 in a cAMP-dependent manner. Nucleotide exchange is also specifically stimulated by RAPGEF5, RASGEF1A and RASGEF1B. In terms of biological role, small GTP-binding protein which cycles between a GDP-bound inactive and a GTP-bound active form. In its active form interacts with and regulates several effectors including MAP4K4, MINK1 and TNIK. Part of a signaling complex composed of NEDD4, RAP2A and TNIK which regulates neuronal dendrite extension and arborization during development. More generally, it is part of several signaling cascades and may regulate cytoskeletal rearrangements, cell migration, cell adhesion and cell spreading. The polypeptide is Ras-related protein Rap-2a (Mus musculus (Mouse)).